Consider the following 387-residue polypeptide: Methyltransferase phomM (387 aa).

The segment at 98–223 is methyltransferase domain; it reads PHRPKDLHIL…QSVADLFTTL (126 aa).

The protein belongs to the class I-like SAM-binding methyltransferase superfamily. Erg6/SMT family.

Its pathway is mycotoxin biosynthesis. In terms of biological role, methyltransferase; part of the gene cluster that mediates the biosynthesis of the phomopsins, a group of hexapeptide mycotoxins which infects lupins and causes lupinosis disease in livestock. Within the pathway, phomM acts as an S-adenosylmethionine-dependent alpha-N-methyltransferase that catalyzes two successive N-methylation reactions, converting N-desmethyl-phomopsin A to phomopsin A and phomopsin A further to an N,N-dimethylated congener called phomopsin E. The pathway starts with the processing of the precursor phomA by several endopeptidases including kexin proteases as well as the cluster-specific S41 family peptidase phomP1 and the oligopeptidase phomG to produce 10 identical copies of the hexapeptide Tyr-Val-Ile-Pro-Ile-Asp. After being excised from the precursor peptide, the core peptides are cyclized and modified post-translationally by enzymes encoded within the gene cluster. The timing and order of proteolysis of the phomA precursor and PTMs are still unknown. Two tyrosinase-like enzymes, phomQ1 and phomQ2, catalyze the chlorination and hydroxylation of Tyr, respectively. PhomYb, is proposed to be involved in the construction of the macrocyclic structure. The other 4 ustYa family proteins may be involved in PTMs that generate the unique structure of phomopsin A. PhomYa is required for the hydroxylation of C-beta of Tyr. PhomYc, phomYd, and phomYe are responsible for the biosynthesis of 2,3-dehydroisoleucine (dIle), 2,3-dehydroaspartic acid (dAsp), and 3,4-dehydroproline (dPro), respectively. While dIle formation by phomYc is indispensable for the installation of dAsp by phomYd, the order of the other PTMs have not been elucidated yet. Most of the biosynthetic enzymes likely have broad substrate specificity, and thus, there might be a metabolic grid from a precursor to phomopsin A. The enzyme(s) responsible for the biosynthesis of 3,4-dehydrovaline (dVal) have also not been identified yet. Finally, phomM acts as an S-adenosylmethionine-dependent alpha-N-methyltransferase that catalyzes two successive N-methylation reactions, converting N-desmethyl-phomopsin A to phomopsin A and phomopsin A further to an N,N-dimethylated congener called phomopsin E. The chain is Methyltransferase phomM from Diaporthe leptostromiformis (Lupinosis disease fungus).